The primary structure comprises 32 residues: Coenzyme PQQ synthesis protein A (32 aa).

The pyrroloquinoline quinone (Glu-Tyr) cross-link spans 16 to 20 (EINMY).

Belongs to the PqqA family.

It participates in cofactor biosynthesis; pyrroloquinoline quinone biosynthesis. Required for coenzyme pyrroloquinoline quinone (PQQ) biosynthesis. PQQ is probably formed by cross-linking a specific glutamate to a specific tyrosine residue and excising these residues from the peptide. In Dinoroseobacter shibae (strain DSM 16493 / NCIMB 14021 / DFL 12), this protein is Coenzyme PQQ synthesis protein A.